The chain runs to 433 residues: ATP-dependent RNA helicase SUB2 (433 aa).

Residues 1 to 17 (MSAENQEELLDYSDSEE) show a composition bias toward acidic residues. The interval 1-39 (MSAENQEELLDYSDSEEIAVPTTTQAGEGESANDKEADK) is disordered. The Q motif signature appears at 49–77 (TGFRDFLLKPELLRAIGDCGFEHPSEVQQ). In terms of domain architecture, Helicase ATP-binding spans 80–255 (IPQSILGTDV…KKFMQNPLEI (176 aa)). 93–100 (AKSGLGKT) contacts ATP. Positions 202–205 (DECD) match the DEAD box motif. One can recognise a Helicase C-terminal domain in the interval 267-428 (GLQQYYIKLE…EFPEEGVDPS (162 aa)).

It belongs to the DEAD box helicase family. DECD subfamily.

The protein resides in the nucleus. The catalysed reaction is ATP + H2O = ADP + phosphate + H(+). Its function is as follows. ATP-binding RNA helicase involved in transcription elongation and required for the export of mRNA out of the nucleus. SUB2 also plays a role in pre-mRNA splicing and spliceosome assembly. May be involved in rDNA and telomeric silencing, and maintenance of genome integrity. The sequence is that of ATP-dependent RNA helicase SUB2 (SUB2) from Lodderomyces elongisporus (strain ATCC 11503 / CBS 2605 / JCM 1781 / NBRC 1676 / NRRL YB-4239) (Yeast).